The sequence spans 755 residues: Polycomb protein SUZ12 (755 aa).

Disordered stretches follow at residues 26–79 (KMGN…RRIS), 333–377 (NANG…SRRA), and 392–420 (AVGR…SDDR). A compositionally biased stretch (low complexity) spans 30–42 (KASSQAQKRSQSQ). 2 stretches are compositionally biased toward polar residues: residues 43 to 57 (TGDS…DGSG) and 349 to 359 (TQPNGTHNEGT). Residues 411-420 (GEDHPPSDDR) are compositionally biased toward basic and acidic residues. A C2H2-type zinc finger spans residues 436–458 (FACLICGAENERLSQLRAHYMCH). Positions 580–645 (IDDSWLLLKH…KADWLVSKRS (66 aa)) are polycomb protein VEFS-Box.

Belongs to the VEFS (VRN2-EMF2-FIS2-SU(Z)12) family. Component of the polycomb repressive complex 2 (PRC2) that consists of four core subunits icluding EZH2, EED, SUZ12, and RBBP4, among which EZH2 is the catalytic subunit and which minimally requires EED and SUZ12 for catalysis.

The protein localises to the nucleus. Functionally, component of the of the Polycomb Repressive Complex 2 (PRC2), a histone H3 lysine methyltransferase responsible for generating mono-, di-, and tri-methylation on Lys27 (H3K27me1, H3K27me2 and H3K27me3). The tri-methylated form is known to be critical in gene repression, and its proper placement is essential in defining repression patterns during development. SUZ12 is not a catalytic subunit but is required for the complex regulation of histone H3 lysine methylation by EZH2. This is Polycomb protein SUZ12 from Chaetomium thermophilum (strain DSM 1495 / CBS 144.50 / IMI 039719) (Thermochaetoides thermophila).